The sequence spans 1368 residues: Cingulin (1368 aa).

The interaction with TJP3/ZO3 and myosin stretch occupies residues 9 to 378 (MADQHIPVGQ…KQQRTVQSEF (370 aa)). Residues 9–435 (MADQHIPVGQ…EKLPSLQVQP (427 aa)) are head. Residues 41–55 (QDSYGVAVRVQGIDG) carry the ZIM motif. Disordered stretches follow at residues 71–264 (FGVQ…TKPL), 278–312 (GQVR…DTAD), 1053–1080 (SRKE…NSSR), 1163–1183 (NRSR…RSRG), and 1308–1368 (QQEI…TSSC). Over residues 83-97 (NASNTSPPNYQNYSS) the composition is skewed to polar residues. Residues 101–294 (GPSRSISSES…ARRSQALKDE (194 aa)) are interaction with F-actin. Low complexity-rich tracts occupy residues 116-132 (PYGS…YSSA) and 200-211 (SQSSRDSAWSRS). An interaction with TJP2/ZO2 region spans residues 150–295 (SSLPRPLQAS…RRSQALKDER (146 aa)). Residues 228–256 (SATSQQSTSVSNKTKKNGLSTSSPSNQSN) are compositionally biased toward polar residues. Residues 290-312 (ALKDERKRSQSLDGRKNYHDTAD) are compositionally biased toward basic and acidic residues. Residues 377-1368 (EFQLKSTPDL…TESNLQTSSC (992 aa)) are interaction with myosin. Positions 436–1330 (GEDTISLGSQ…VMEKESKRKP (895 aa)) form a coiled coil. Residues 1320-1338 (KVMEKESKRKPIRPAHDDD) show a composition bias toward basic and acidic residues. The interval 1331–1368 (IRPAHDDDLSSDGEFGGPYDPSSITSLLTESNLQTSSC) is tail. Positions 1352 to 1368 (SSITSLLTESNLQTSSC) are enriched in polar residues.

The protein belongs to the cingulin family. In terms of assembly, parallel homodimer. Interacts with TJP1/ZO1 and TJP2/ZO2 in vivo, and TJP3/ZO3, myosin and OCLN in vitro, possibly directly. Acts as an F-actin bundling protein in vitro. In terms of tissue distribution, localized on the cytoplasmic face of tight junctions of polarized epithelia and some endothelia.

The protein localises to the cell junction. The protein resides in the tight junction. Functionally, probably plays a role in the formation and regulation of the tight junction (TJ) paracellular permeability barrier, possibly by linking ZO proteins to the actomyosin cytoskeleton. This is Cingulin from Xenopus laevis (African clawed frog).